The chain runs to 621 residues: DNA-directed RNA polymerase subunit gamma (621 aa).

Residues aspartate 463, aspartate 465, and aspartate 467 each contribute to the Mg(2+) site.

The protein belongs to the RNA polymerase beta' chain family. RpoC1 subfamily. As to quaternary structure, in cyanobacteria the RNAP catalytic core is composed of 2 alpha, 1 beta, 1 beta', 1 gamma and 1 omega subunit. When a sigma factor is associated with the core the holoenzyme is formed, which can initiate transcription. Mg(2+) is required as a cofactor.

It carries out the reaction RNA(n) + a ribonucleoside 5'-triphosphate = RNA(n+1) + diphosphate. In terms of biological role, DNA-dependent RNA polymerase catalyzes the transcription of DNA into RNA using the four ribonucleoside triphosphates as substrates. In Nostoc commune, this protein is DNA-directed RNA polymerase subunit gamma.